We begin with the raw amino-acid sequence, 91 residues long: Insertion element IS1 2 protein InsA (91 aa).

It belongs to the IS1 elements InsA family.

Absolutely required for transposition of IS1. This is Insertion element IS1 2 protein InsA (insA2) from Escherichia coli (strain K12).